Reading from the N-terminus, the 81-residue chain is UPF0248 protein SSO2687 (81 aa).

This sequence belongs to the UPF0248 family.

The protein is UPF0248 protein SSO2687 of Saccharolobus solfataricus (strain ATCC 35092 / DSM 1617 / JCM 11322 / P2) (Sulfolobus solfataricus).